The following is a 1081-amino-acid chain: Teashirt homolog 3 (1081 aa).

Disordered stretches follow at residues 25 to 104 (LVED…EVQV), 141 to 161 (PSSENNGGSSSSSSSSSSSCG), and 238 to 257 (HYRDDNHETDNNNPKRWSKP). Over residues 26 to 37 (VEDDVEPEEQAA) the composition is skewed to acidic residues. Positions 68–87 (SSHEMDSESHISETSDRMAD) are enriched in basic and acidic residues. 2 consecutive C2H2-type zinc fingers follow at residues 214 to 238 (FRCKDCSAAYDTLVELTVHMNETGH) and 275 to 299 (LKCMYCGHSFESLQDLSVHMIKTKH). Over residues 238-247 (HYRDDNHETD) the composition is skewed to basic and acidic residues. The tract at residues 325–346 (SLELELPSSPDSTGGTPKATLS) is disordered. The C2H2-type 3; atypical zinc finger occupies 387–410 (KCMECGSSHDTLQELTAHMMVTGH). Residues 474–491 (VDKEKAVPDEKPKEREKP) show a composition bias toward basic and acidic residues. Disordered regions lie at residues 474–499 (VDKEKAVPDEKPKEREKPSEEEEKYD), 626–699 (EKMK…KPLS), 792–824 (LTKGKSDKGCSLGSGLLSPTSTSPATSSSTVTT), and 855–897 (TESH…RQSN). Residues 606-630 (NFHAMEELVKKVTEKVAKVEEKMKE) adopt a coiled-coil conformation. The span at 660 to 670 (SDGSFKSQENS) shows a compositional bias: polar residues. A Phosphoserine modification is found at serine 682. 2 stretches are compositionally biased toward low complexity: residues 800–824 (GCSLGSGLLSPTSTSPATSSSTVTT) and 856–869 (ESHTSKSSTPSSIS). A DNA-binding region (homeobox; atypical) is located at residues 891–961 (RKGRQSNWNP…NVKYQLRRTG (71 aa)). 2 consecutive C2H2-type zinc fingers follow at residues 976–998 (FFCNDCASQIRTPSTYISHLESH) and 1041–1064 (YQCKLCNRTFASKHAVKLHLSKTH).

This sequence belongs to the teashirt C2H2-type zinc-finger protein family. Interacts (via N-terminus) with HDAC1 and HDAC2; the interaction is direct. Found in a trimeric complex with APBB1 and HDAC1; the interaction between HDAC1 and APBB1 is mediated by TSHZ3. Interacts (via homeobox domain) with APBB1 (via PID domain 1). In terms of tissue distribution, expressed in corticostriatal neurons.

It localises to the nucleus. The protein localises to the cell projection. It is found in the growth cone. Transcriptional regulator involved in developmental processes. Functions in association with APBB1, SET and HDAC factors as a transcriptional repressor, that inhibits the expression of CASP4. TSHZ3-mediated transcription repression involves the recruitment of histone deacetylases HDAC1 and HDAC2. Associates with chromatin in a region surrounding the CASP4 transcriptional start site(s). Regulates the development of neurons involved in both respiratory rhythm and airflow control. Promotes maintenance of nucleus ambiguus (nA) motoneurons, which govern upper airway function, and establishes a respiratory rhythm generator (RRG) activity compatible with survival at birth. Involved in the differentiation of the proximal uretic smooth muscle cells during developmental processes. Involved in the up-regulation of myocardin, that directs the expression of smooth muscle cells in the proximal ureter. Involved in the modulation of glutamatergic synaptic transmission and long-term synaptic potentiation. This is Teashirt homolog 3 (Tshz3) from Mus musculus (Mouse).